The sequence spans 349 residues: Alcohol dehydrogenase 1 (349 aa).

Residues C46, H69, C100, C103, C106, C114, and C156 each contribute to the Zn(2+) site. Residues 180–186, D204, K208, 270–272, and R342 contribute to the NAD(+) site; these read GAGGGLG and VGL.

This sequence belongs to the zinc-containing alcohol dehydrogenase family. As to quaternary structure, homotetramer. The cofactor is Zn(2+).

The enzyme catalyses a primary alcohol + NAD(+) = an aldehyde + NADH + H(+). It carries out the reaction a secondary alcohol + NAD(+) = a ketone + NADH + H(+). This is Alcohol dehydrogenase 1 from Caenorhabditis elegans.